The primary structure comprises 204 residues: Cobalt-containing nitrile hydratase subunit alpha (204 aa).

Cys108, Cys111, Ser112, and Cys113 together coordinate Co(2+). Cys111 is modified (cysteine sulfinic acid (-SO2H)). Position 113 is a cysteine sulfenic acid (-SOH) (Cys113).

Belongs to the nitrile hydratase subunit alpha family. In terms of assembly, heterotetramer of two alpha and two beta chains. The cofactor is Co(2+).

It catalyses the reaction an aliphatic primary amide = an aliphatic nitrile + H2O. Functionally, NHase catalyzes the hydration of various nitrile compounds to the corresponding amides. In Pseudonocardia thermophila, this protein is Cobalt-containing nitrile hydratase subunit alpha.